A 460-amino-acid chain; its full sequence is Cysteine--tRNA ligase (460 aa).

Cys28 serves as a coordination point for Zn(2+). The 'HIGH' region signature appears at 30–40 (MTVYDYCHLGH). Cys209, His234, and Glu238 together coordinate Zn(2+). Residues 266–270 (KMSKS) carry the 'KMSKS' region motif. Lys269 serves as a coordination point for ATP.

Belongs to the class-I aminoacyl-tRNA synthetase family. As to quaternary structure, monomer. Zn(2+) is required as a cofactor.

It is found in the cytoplasm. It catalyses the reaction tRNA(Cys) + L-cysteine + ATP = L-cysteinyl-tRNA(Cys) + AMP + diphosphate. The sequence is that of Cysteine--tRNA ligase from Pseudomonas putida (strain ATCC 47054 / DSM 6125 / CFBP 8728 / NCIMB 11950 / KT2440).